Consider the following 120-residue polypeptide: UPF0231 protein CKO_03249 (120 aa).

It belongs to the UPF0231 family.

The protein is UPF0231 protein CKO_03249 of Citrobacter koseri (strain ATCC BAA-895 / CDC 4225-83 / SGSC4696).